The primary structure comprises 247 residues: uncharacterized protein (247 aa).

2 consecutive transmembrane segments (helical) span residues 9–29 and 37–57; these read IIAI…FLIF and SYFL…SLII.

The protein localises to the cell membrane. This is an uncharacterized protein from Methanocaldococcus jannaschii (strain ATCC 43067 / DSM 2661 / JAL-1 / JCM 10045 / NBRC 100440) (Methanococcus jannaschii).